The sequence spans 212 residues: Large ribosomal subunit protein uL3 (212 aa).

Over residues 135–155 the composition is skewed to polar residues; sequence ATHGNSVSHRAHGSTGQNQSP. Residues 135-162 form a disordered region; it reads ATHGNSVSHRAHGSTGQNQSPGKVFKGK. Gln153 carries the post-translational modification N5-methylglutamine.

It belongs to the universal ribosomal protein uL3 family. As to quaternary structure, part of the 50S ribosomal subunit. Forms a cluster with proteins L14 and L19. In terms of processing, methylated by PrmB.

Functionally, one of the primary rRNA binding proteins, it binds directly near the 3'-end of the 23S rRNA, where it nucleates assembly of the 50S subunit. The chain is Large ribosomal subunit protein uL3 from Psychrobacter arcticus (strain DSM 17307 / VKM B-2377 / 273-4).